We begin with the raw amino-acid sequence, 1116 residues long: ELKS/Rab6-interacting/CAST family member 1 (1116 aa).

The segment at 1–54 (MYGSARSVGKVEPSSQSPGRSPRLPRSPRLGHRRTNSTGGSSGSSVGGGSGKTL) is disordered. The residue at position 10 (K10) is an N6-acetyllysine. Over residues 13 to 28 (PSSQSPGRSPRLPRSP) the composition is skewed to low complexity. S17, S21, and S37 each carry phosphoserine. Phosphothreonine is present on T38. Residues 40 to 51 (GSSGSSVGGGSG) are compositionally biased toward gly residues. Phosphoserine occurs at positions 55, 75, and 94. Residues 144–988 (RQARDNTIMD…RMKLMADNYE (845 aa)) adopt a coiled-coil conformation. A compositionally biased stretch (basic and acidic residues) spans 590–602 (KEKQMSSLKERVK). Disordered regions lie at residues 590–609 (KEKQ…ADTT) and 814–836 (ARRR…RKKD). S1005 carries the post-translational modification Phosphoserine. T1046 is modified (phosphothreonine). Residues 1046 to 1108 (TPPASYNLDD…DHCPDILEQV (63 aa)) form the FIP-RBD domain. The stretch at 1060–1100 (WENELQKMTRGQLQDELEKGERDNAELQEFANAILQQIADH) forms a coiled coil.

As to quaternary structure, part of a complex with CHUK, IKBKB and IKBKG. Interacts with CHUK, IKBKB and IKBKG. The interaction with IKBKG is independent of CHUK and IKBKB. Interacts with NFKBIA. Isoform 4 interacts with PPFIA1, and through its C-terminus with the PDZ domains of RIMS1 and RIMS2. Interacts with ERC2/CAST1. Interacts with the GTB-bound forms of RAB6A isoform 1 and isoform 2 and with RAB6B. The interaction was strongest with RAB6B, followed by RAB6A isoform 2 and weakest with RAB6A isoform 1. Interacts with SDCCAG8. Part of a cortical microtubule stabilization complex (CMSC) composed of KANK1, PPFIA1, PPFIBP1, ERC1/ELKS, PHLDB2/LL5beta, CLASPs, KIF21A and possibly additional interactors; within CMSCs KANK1 and PHLDB2/LL5beta appear to be the core components for targeting of microtubule-binding proteins KIF21A and CLASPs, whereas PPFIA1, PPFIBP1 and ERC1/ELKS serve as scaffolds for protein clustering. In terms of tissue distribution, widely expressed. Isoform 2 and isoform 4 are abundantly expressed in brain. Isoform 1 and isoform 3 are predominantly expressed in testis and thyroid, and isoform 1 predominates in other tissues tested.

The protein resides in the cytoplasm. The protein localises to the cytoskeleton. Its subcellular location is the microtubule organizing center. It is found in the centrosome. It localises to the membrane. The protein resides in the golgi apparatus membrane. The protein localises to the presynaptic cell membrane. Its subcellular location is the cell projection. It is found in the podosome. Functionally, regulatory subunit of the IKK complex. Probably recruits IkappaBalpha/NFKBIA to the complex. May be involved in the organization of the cytomatrix at the nerve terminals active zone (CAZ) which regulates neurotransmitter release. May be involved in vesicle trafficking at the CAZ. May be involved in Rab-6 regulated endosomes to Golgi transport. The sequence is that of ELKS/Rab6-interacting/CAST family member 1 (ERC1) from Homo sapiens (Human).